A 156-amino-acid polypeptide reads, in one-letter code: Ribosomal RNA large subunit methyltransferase H (156 aa).

S-adenosyl-L-methionine-binding positions include Leu-73, Gly-104, and 123–128; that span reads LSALTL.

The protein belongs to the RNA methyltransferase RlmH family. As to quaternary structure, homodimer.

Its subcellular location is the cytoplasm. The catalysed reaction is pseudouridine(1915) in 23S rRNA + S-adenosyl-L-methionine = N(3)-methylpseudouridine(1915) in 23S rRNA + S-adenosyl-L-homocysteine + H(+). Functionally, specifically methylates the pseudouridine at position 1915 (m3Psi1915) in 23S rRNA. The chain is Ribosomal RNA large subunit methyltransferase H from Shewanella sp. (strain MR-7).